We begin with the raw amino-acid sequence, 68 residues long: Conotoxin mr3g (68 aa).

Positions 1–19 are cleaved as a signal peptide; that stretch reads MSKLGVLLTICLLLFALTA. A propeptide spanning residues 20 to 51 is cleaved from the precursor; sequence VPLDGDQPADRPAERMQDDISSERHPMFDAVR. 3 disulfides stabilise this stretch: C53–C67, C54–C63, and C59–C66. A 4-hydroxyproline mark is found at P55 and P65. C67 carries the post-translational modification Cysteine amide.

Expressed by the venom duct.

The protein resides in the secreted. Its function is as follows. Intracranially injection into mice does not elicit symptoms. This Conus marmoreus (Marble cone) protein is Conotoxin mr3g.